The chain runs to 567 residues: Signal transducer and activator of transcription b (567 aa).

Positions 449–548 (WYDGLVYGFC…LGGRNKPRIR (100 aa)) constitute an SH2 domain.

Belongs to the transcription factor STAT family. May interact with sodium-dependent transporter snf-12; the interaction is probably direct.

The protein resides in the cytoplasm. Its subcellular location is the nucleus. It localises to the vesicle. Functionally, carries out a dual function: signal transduction and activation of transcription. Required, in concert with transcription factor elt-3, for up-regulation of the vacuolar H(+)-ATPase and acceleration of lysosome maturation at molt. As part of the innate immune response to molting and injury of the adult epidermis, positively regulates the expression of epidermal antimicrobial peptides, such as nlp-29. Through positively modulating the expression of epidermal antimicrobial peptides, such as nlp-29, plays a role in resistance to fungal infection and in the response to physical wounding and phorbol ester PMA treatment. Functions cell autonomously in the epidermis, in concert with sodium-dependent transporter snf-12, probably acting at vesicular membranes, downstream of a p38 MAPK/pmk-1 pathway. This Caenorhabditis elegans protein is Signal transducer and activator of transcription b.